A 363-amino-acid polypeptide reads, in one-letter code: Protein RecA (363 aa).

Gly78–Thr85 is a binding site for ATP.

This sequence belongs to the RecA family.

Its subcellular location is the cytoplasm. Functionally, can catalyze the hydrolysis of ATP in the presence of single-stranded DNA, the ATP-dependent uptake of single-stranded DNA by duplex DNA, and the ATP-dependent hybridization of homologous single-stranded DNAs. It interacts with LexA causing its activation and leading to its autocatalytic cleavage. Probably involved in base excision repair. In terms of biological role, following severe irradiation (7 kGy of gamma irradiation) genomic DNA is fragmented. DNA is progressively degraded for the first 1.5 hours after IR, in a step promoted by RecA and counterbalanced by DNA Pol I and Pol III, followed by massive DNA synthesis and genome reassembly in the next hour. Optimal priming of DNA synthesis requires both RecA and RadA, Pol III initiates DNA synthesis while both Pol I and Pol III are required for its continuation. In the absence of RecA the majority of the chromosome is still reconstituted, via either single-strand annealing or non-homologous end joining. This Deinococcus radiodurans (strain ATCC 13939 / DSM 20539 / JCM 16871 / CCUG 27074 / LMG 4051 / NBRC 15346 / NCIMB 9279 / VKM B-1422 / R1) protein is Protein RecA.